The chain runs to 431 residues: UDP-N-acetylglucosamine 1-carboxyvinyltransferase (431 aa).

22 to 23 (KN) is a binding site for phosphoenolpyruvate. A UDP-N-acetyl-alpha-D-glucosamine-binding site is contributed by arginine 102. Cysteine 126 functions as the Proton donor in the catalytic mechanism. Cysteine 126 is subject to 2-(S-cysteinyl)pyruvic acid O-phosphothioketal. The UDP-N-acetyl-alpha-D-glucosamine site is built by aspartate 318 and isoleucine 340.

Belongs to the EPSP synthase family. MurA subfamily.

The protein resides in the cytoplasm. It catalyses the reaction phosphoenolpyruvate + UDP-N-acetyl-alpha-D-glucosamine = UDP-N-acetyl-3-O-(1-carboxyvinyl)-alpha-D-glucosamine + phosphate. It functions in the pathway cell wall biogenesis; peptidoglycan biosynthesis. Functionally, cell wall formation. Adds enolpyruvyl to UDP-N-acetylglucosamine. This chain is UDP-N-acetylglucosamine 1-carboxyvinyltransferase, found in Bartonella tribocorum (strain CIP 105476 / IBS 506).